The primary structure comprises 783 residues: NADH-quinone oxidoreductase subunit 3 (783 aa).

Residues 1-99 form the 2Fe-2S ferredoxin-type domain; sequence MVRVKVNDRI…GMVVDTLSDV (99 aa). The [2Fe-2S] cluster site is built by cysteine 34, cysteine 45, cysteine 48, and cysteine 83. Residues 99 to 138 form the 4Fe-4S His(Cys)3-ligated-type domain; sequence VVREAQAGMVEFTLLNHPLDCPTCDKGGACELQDRTVEYG. 12 residues coordinate [4Fe-4S] cluster: histidine 115, cysteine 119, cysteine 122, cysteine 128, cysteine 181, cysteine 184, cysteine 187, cysteine 230, cysteine 256, cysteine 259, cysteine 263, and cysteine 291. The 4Fe-4S Mo/W bis-MGD-type domain maps to 249 to 305; the sequence is MEETPTTCALCPVGCGITADTRSGELLRIRAREVPEVNEIWICDAGRFGHEWADQNR.

It belongs to the complex I 75 kDa subunit family. As to quaternary structure, NDH-1 is composed of 15 different subunits, Nqo1 to Nqo15. The complex has a L-shaped structure, with the hydrophobic arm (subunits Nqo7, Nqo8 and Nqo10 to Nqo14) embedded in the membrane and the hydrophilic peripheral arm (subunits Nqo1 to Nqo6, Nqo9 and Nqo15) protruding into the bacterial cytoplasm. The hydrophilic domain contains all the redox centers. [2Fe-2S] cluster is required as a cofactor. [4Fe-4S] cluster serves as cofactor.

Its subcellular location is the cell membrane. The enzyme catalyses a quinone + NADH + 5 H(+)(in) = a quinol + NAD(+) + 4 H(+)(out). In terms of biological role, NDH-1 shuttles electrons from NADH, via FMN and iron-sulfur (Fe-S) centers, to quinones in the respiratory chain. The immediate electron acceptor for the enzyme in this species is menaquinone. Couples the redox reaction to proton translocation (for every two electrons transferred, four hydrogen ions are translocated across the cytoplasmic membrane), and thus conserves the redox energy in a proton gradient required for the synthesis of ATP. The chain is NADH-quinone oxidoreductase subunit 3 (nqo3) from Thermus thermophilus (strain ATCC 27634 / DSM 579 / HB8).